Reading from the N-terminus, the 471-residue chain is Light-independent protochlorophyllide reductase subunit N (471 aa).

[4Fe-4S] cluster is bound by residues Cys-22, Cys-47, and Cys-107.

It belongs to the BchN/ChlN family. In terms of assembly, protochlorophyllide reductase is composed of three subunits; ChlL, ChlN and ChlB. Forms a heterotetramer of two ChlB and two ChlN subunits. Requires [4Fe-4S] cluster as cofactor.

It is found in the plastid. It localises to the chloroplast. The enzyme catalyses chlorophyllide a + oxidized 2[4Fe-4S]-[ferredoxin] + 2 ADP + 2 phosphate = protochlorophyllide a + reduced 2[4Fe-4S]-[ferredoxin] + 2 ATP + 2 H2O. It participates in porphyrin-containing compound metabolism; chlorophyll biosynthesis (light-independent). Its function is as follows. Component of the dark-operative protochlorophyllide reductase (DPOR) that uses Mg-ATP and reduced ferredoxin to reduce ring D of protochlorophyllide (Pchlide) to form chlorophyllide a (Chlide). This reaction is light-independent. The NB-protein (ChlN-ChlB) is the catalytic component of the complex. This Huperzia lucidula (Shining clubmoss) protein is Light-independent protochlorophyllide reductase subunit N.